We begin with the raw amino-acid sequence, 950 residues long: Protocadherin alpha-13 (950 aa).

A signal peptide spans 1–29 (MLSSWQGGPRPRQLLLWLLILAAWETGSG). Residues 30-697 (QLHYSVPEEA…GPEAALVDVN (668 aa)) are Extracellular-facing. Cadherin domains lie at 34 to 133 (SVPE…PPIF), 134 to 242 (PESK…APEF), 243 to 350 (YQSV…APEV), 351 to 455 (TITS…APAF), 456 to 565 (AQPE…APAL), and 581 to 678 (MPRS…APQA). N-linked (GlcNAc...) asparagine glycans are attached at residues Asn257 and Asn265. A glycan (N-linked (GlcNAc...) asparagine) is linked at Asn548. A helical transmembrane segment spans residues 698 to 718 (VYLIIAICAVSSLLVLTLLLY). Topologically, residues 719 to 950 (TALRCSAPPT…GNSTTDNSDQ (232 aa)) are cytoplasmic. 6 PXXP repeats span residues 734–737 (PGKP), 774–777 (PSLP), 799–802 (PRQP), 832–835 (PGGP), 873–876 (PGNP), and 891–894 (PGSP). The tract at residues 734–894 (PGKPTLVCSS…PDKFIIPGSP (161 aa)) is 6 X 4 AA repeats of P-X-X-P. Disordered stretches follow at residues 780 to 806 (LGSA…NPDW) and 829 to 950 (RAGP…NSDQ). Positions 787–800 (GQREEDSECLKEPR) are enriched in basic and acidic residues. Basic and acidic residues predominate over residues 909-923 (DKSDFITFGKKEETK).

The protein resides in the cell membrane. In terms of biological role, potential calcium-dependent cell-adhesion protein. May be involved in the establishment and maintenance of specific neuronal connections in the brain. In Homo sapiens (Human), this protein is Protocadherin alpha-13 (PCDHA13).